The sequence spans 551 residues: Colicin E3 (551 aa).

Disordered stretches follow at residues 1–74, 243–269, and 293–320; these read MSGG…SGGG, TLSP…NTRD, and PDQV…EAAE. Positions 1 to 315 are translocation (T) domain; it reads MSGGDGRGHN…RQQEWDATHP (315 aa). Over residues 20-35 the composition is skewed to gly residues; it reads INGGPTGLGVGGGASD. Positions 35-39 match the Binds to TolB motif; it reads DGSGW. Residues 36–45 show a composition bias toward low complexity; it reads GSGWSSENNP. The segment covering 46–74 has biased composition (gly residues); the sequence is WGGGSGSGIHWGGGSGHGNGGGNGNSGGG. Residues 296–320 show a composition bias toward basic and acidic residues; it reads VKQRQDEENRRQQEWDATHPVEAAE. Residues 316–378 are a coiled coil; the sequence is VEAAERNYER…IAEIKQFNRF (63 aa). Residues 316 to 450 form a receptor-binding (R) domain region; that stretch reads VEAAERNYER…SAENNLNDEK (135 aa). Residues 379–385 carry the Hairpin motif; the sequence is AHDPMAG. The stretch at 386-450 forms a coiled coil; it reads GHRMWQMAGL…SAENNLNDEK (65 aa). The disordered stretch occupies residues 406–505; that stretch reads NKQAAFDAAA…KRWTGDKGRK (100 aa). A compositionally biased stretch (basic and acidic residues) spans 430–472; that stretch reads ESRKKKEDKKRSAENNLNDEKNKPRKGFKDYGHDYHPAPKTEN. The segment at 451 to 456 is linker; sequence NKPRKG. Residues 455-551 are ribosome inactivating activity; that stretch reads KGFKDYGHDY…DPKRNIKKYL (97 aa). The interval 457 to 551 is cytotoxic RNase (C) domain; that stretch reads FKDYGHDYHP…DPKRNIKKYL (95 aa). Residue H513 is the Proton donor of the active site. E517 (proton acceptor) is an active-site residue. Positions 517-551 are disordered; it reads EGYRASDGQHLGSFDPKTGNQLKGPDPKRNIKKYL. Positions 530–551 are binding of immunity protein; sequence FDPKTGNQLKGPDPKRNIKKYL. Residue R545 is part of the active site.

Belongs to the cloacin colicin family. In terms of assembly, native colicin E3 is a 1:1 complex of A chain and protein B (cognate immunity protein, Im3); protein A is 1,000-fold more active in inactivating ribosomes than the native complex. The cytotoxic fragment (residues 456-551, C95) forms a 1:1 complex with Im3. The receptor-binding (R) domain binds obliquely to its receptor BtuB without displacing BtuB's central plug; binding unfolds the R domain. The N-terminal 83 residues (T83) bind OmpF; trimeric complexes with colicin E3, BtuB and OmpF can be cross-linked and immunoprecipitated. Probably inserts into the OmpF pore as an unfolded peptide and spans the OmpF pore. In a complex with T.thermophilus 70S ribosomes, cytotoxic fragment C96 contacts 16S rRNA, 23S rRNA, mRNA, P-site tRNA and ribosomal protein uS12.

It localises to the secreted. Colicins are polypeptide toxins produced by and active against E.coli and closely related bacteria. Cleaves 16S rRNA between adenosine-1492 and guanosine-1493 (E.coli 16S rRNA numbering), releasing a 49 nucleotide (nt) 'colicin' fragment. Inactivates 70S ribosomes or 30S subunits by endonucleolytically cleaving 16S RNA at a specific site about 50 nt from its C-terminus. Produces 5'-OH-guanosine and a 2',3'-cyclic phosphate adenosine. Mixing a susceptible (e.g. strain K12 / A19) and colicin E3 producing strain results in total protein translation inhibition within 11 minutes. Its activity is inhibited by cognate immunity protein Im3. In terms of biological role, uses BtuB, the vitamin B transporter, as a receptor on the outer membrane; binds via the receptor (R) domain. Then the translocation domain (T) probably 'fishes' for its outer membrane translocon protein, OmpF. The N-terminal 83 residues (T83) can bind to and occlude OmpF channels. A complex of the cytotoxic C-terminal 96 residues (C96) plus the immunity protein does not occlude OmpF; upon complex separation from the immunity protein C96 becomes disordered and is able to bind OmpF. The N-terminus probably binds TolB and then reinserts into an empty pore of trimeric OmpF; the rest of the protein is pulled through OmpF and crosses the inner membrane, where the cytotoxic fragment is probably released by protease FtsH. This is Colicin E3 (ceaC) from Escherichia coli.